A 72-amino-acid polypeptide reads, in one-letter code: MAKEEAIEIEGVILDALPNAQFKVKLENGLEVLAHVSGKIRMHYIRILAGDKVKVQISPYDITKGRITYRYK.

In terms of domain architecture, S1-like spans 1-72 (MAKEEAIEIE…TKGRITYRYK (72 aa)).

It belongs to the IF-1 family. Component of the 30S ribosomal translation pre-initiation complex which assembles on the 30S ribosome in the order IF-2 and IF-3, IF-1 and N-formylmethionyl-tRNA(fMet); mRNA recruitment can occur at any time during PIC assembly.

It localises to the cytoplasm. One of the essential components for the initiation of protein synthesis. Stabilizes the binding of IF-2 and IF-3 on the 30S subunit to which N-formylmethionyl-tRNA(fMet) subsequently binds. Helps modulate mRNA selection, yielding the 30S pre-initiation complex (PIC). Upon addition of the 50S ribosomal subunit IF-1, IF-2 and IF-3 are released leaving the mature 70S translation initiation complex. This is Translation initiation factor IF-1 from Chlorobium phaeobacteroides (strain DSM 266 / SMG 266 / 2430).